A 561-amino-acid chain; its full sequence is 2-methylisocitrate lyase, mitochondrial (561 aa).

The segment at 154–177 is disordered; that stretch reads KAQSMHDRKQWDTRRKMSPDERSK. Positions 157–177 are enriched in basic and acidic residues; sequence SMHDRKQWDTRRKMSPDERSK. C228 is an active-site residue.

Belongs to the isocitrate lyase/PEP mutase superfamily. Isocitrate lyase family. The cofactor is Mg(2+).

It is found in the mitochondrion matrix. It catalyses the reaction (2S,3R)-3-hydroxybutane-1,2,3-tricarboxylate = pyruvate + succinate. Its pathway is organic acid metabolism; propanoate degradation. Its function is as follows. Component of the methylcitrate cycle that catalyzes the formation of pyruvate and succinate from 2-methylisocitrate during the metabolism of endogenous propionyl-CoA. Plays an important role for growth and development, but also in antagonism, root colonization and induction of defense responses in plants. In Hypocrea atroviridis (strain ATCC 20476 / IMI 206040) (Trichoderma atroviride), this protein is 2-methylisocitrate lyase, mitochondrial.